The chain runs to 222 residues: Protein CicA (222 aa).

This is Protein CicA (cicA) from Caulobacter vibrioides (strain ATCC 19089 / CIP 103742 / CB 15) (Caulobacter crescentus).